Here is a 95-residue protein sequence, read N- to C-terminus: Nickel and cobalt resistance protein CnrY (95 aa).

Residues 1–45 are Cytoplasmic-facing; that stretch reads MADVEEWLTHARKVTQEASIGVDVTSIQECISAEPAQRVLVARRD. The helical transmembrane segment at 46-68 threads the bilayer; sequence AWRAICCAAFAALVAFAAINRVA. Topologically, residues 69 to 95 are periplasmic; the sequence is TIMLEKPAPTWVATPSAASPFGLLIGK.

To A.xylosoxydans NccY.

It localises to the cell inner membrane. Functionally, nickel and cobalt resistance proteins CnrA, CnrB, CnrC CnrH and CnrR may be involved in the regulation of CNR. In terms of biological role, cnrH alone is able to activate cnr expression, and both CnrY and CrnX are needed for nickel induction of CnrH. In the absence of wild-type CnrY (due either to a frameshift, PubMed:10671463 or absence of the transcript, PubMed:10671464), nickel and cobalt resistance is constitutive, indicating that CrnY may act as a repressor or an anti-sigma factor. This chain is Nickel and cobalt resistance protein CnrY (cnrY), found in Cupriavidus metallidurans (strain ATCC 43123 / DSM 2839 / NBRC 102507 / CH34) (Ralstonia metallidurans).